A 907-amino-acid polypeptide reads, in one-letter code: Probable dipeptidyl-aminopeptidase B (907 aa).

Basic and acidic residues predominate over residues 1-11 (MYDQVPYRDTD). The tract at residues 1–71 (MYDQVPYRDT…RGKPDEDDDL (71 aa)) is disordered. Over 1–88 (MYDQVPYRDT…LKPMERKVRR (88 aa)) the chain is Cytoplasmic. The span at 22 to 36 (SDSNRSSIDTTSTTS) shows a compositional bias: low complexity. The chain crosses the membrane as a helical; Signal-anchor for type II membrane protein span at residues 89–109 (AMYLLAFLMIGGWFLALAVYV). Over 110-907 (SREHFGTPDT…PLRKRNRELV (798 aa)) the chain is Vacuolar. N-linked (GlcNAc...) asparagine glycans are attached at residues asparagine 185 and asparagine 341. The active-site Charge relay system is serine 746. Asparagine 800 carries an N-linked (GlcNAc...) asparagine glycan. Catalysis depends on charge relay system residues aspartate 823 and histidine 856.

The protein belongs to the peptidase S9B family.

The protein localises to the vacuole membrane. It carries out the reaction Release of an N-terminal dipeptide, Xaa-Yaa-|-Zaa-, from a polypeptide, preferentially when Yaa is Pro, provided Zaa is neither Pro nor hydroxyproline.. In terms of biological role, type IV dipeptidyl-peptidase which removes N-terminal dipeptides sequentially from polypeptides having unsubstituted N-termini provided that the penultimate residue is proline. This is Probable dipeptidyl-aminopeptidase B (DAPB) from Tuber melanosporum (strain Mel28) (Perigord black truffle).